The primary structure comprises 156 residues: Eosinophil cationic protein 2 (156 aa).

The first 25 residues, 1–25, serve as a signal peptide directing secretion; sequence MGPKLLESRLCLLLLLGLVLMLASC. The Proton acceptor role is filled by H38. 4 disulfide bridges follow: C47–C106, C61–C119, C79–C134, and C86–C94. 62-66 is a substrate binding site; the sequence is KGLNT. N-linked (GlcNAc...) asparagine glycans are attached at residues N89, N96, and N107. H151 functions as the Proton donor in the catalytic mechanism.

This sequence belongs to the pancreatic ribonuclease family.

The protein localises to the cytoplasmic granule. In terms of biological role, cytotoxin and helminthotoxin with ribonuclease activity. Selectively chemotactic for dendritic cells. Possesses a wide variety of biological activities. The polypeptide is Eosinophil cationic protein 2 (Ear2) (Mus musculus (Mouse)).